Consider the following 481-residue polypeptide: Aspartyl/glutamyl-tRNA(Asn/Gln) amidotransferase subunit B (481 aa).

Belongs to the GatB/GatE family. GatB subfamily. As to quaternary structure, heterotrimer of A, B and C subunits.

It catalyses the reaction L-glutamyl-tRNA(Gln) + L-glutamine + ATP + H2O = L-glutaminyl-tRNA(Gln) + L-glutamate + ADP + phosphate + H(+). The catalysed reaction is L-aspartyl-tRNA(Asn) + L-glutamine + ATP + H2O = L-asparaginyl-tRNA(Asn) + L-glutamate + ADP + phosphate + 2 H(+). Allows the formation of correctly charged Asn-tRNA(Asn) or Gln-tRNA(Gln) through the transamidation of misacylated Asp-tRNA(Asn) or Glu-tRNA(Gln) in organisms which lack either or both of asparaginyl-tRNA or glutaminyl-tRNA synthetases. The reaction takes place in the presence of glutamine and ATP through an activated phospho-Asp-tRNA(Asn) or phospho-Glu-tRNA(Gln). The polypeptide is Aspartyl/glutamyl-tRNA(Asn/Gln) amidotransferase subunit B (Pseudomonas putida (strain ATCC 700007 / DSM 6899 / JCM 31910 / BCRC 17059 / LMG 24140 / F1)).